The primary structure comprises 283 residues: Peroxisomal membrane protein PEX18 (283 aa).

The segment at 179 to 201 (SSLEEDVHTEEENSGTSLEDEET) is disordered. Acidic residues predominate over residues 180-200 (SLEEDVHTEEENSGTSLEDEE).

As to quaternary structure, interacts with PEX7; The interaction with PEX7 stabilizes PEX18. Interacts with PEX13. In terms of processing, ubiquitinated in a UBC4/UBC5 dependent manner.

Its subcellular location is the cytoplasm. The protein localises to the peroxisome membrane. Its function is as follows. Involved in peroxisome biogenesis and the import of peroxisomal matrix proteins that contain the peroxisomal targeting sequence PTS2. Required for peroxisomal targeting of PEX7 and growth on oleate. The sequence is that of Peroxisomal membrane protein PEX18 (PEX18) from Saccharomyces cerevisiae (strain ATCC 204508 / S288c) (Baker's yeast).